A 559-amino-acid chain; its full sequence is Protein GRAVITROPIC IN THE LIGHT 1 (559 aa).

Residues 107–127 (AVNRREEYDTEEEENEEEGEI) form a disordered region. Over residues 114–127 (YDTEEEENEEEGEI) the composition is skewed to acidic residues.

Its function is as follows. Required for red (R) and far red (FR) light-induced and phytochrome-mediated deregulation of negative gravitropism leading to randomization of hypocotyl growth orientation. The sequence is that of Protein GRAVITROPIC IN THE LIGHT 1 from Arabidopsis thaliana (Mouse-ear cress).